The primary structure comprises 132 residues: MVMTDPIADFLTRIRNANLAKHEVLEVPASNIKKGIAEILKREGFVKNVEVIEDDKQGIIRVFLKYGQNGERVITNLKRISKPGLRVYSKREDVPKVLNGLGIAIISTSEGLLTDKEARQKNVGGEVIAYVW.

Belongs to the universal ribosomal protein uS8 family. In terms of assembly, part of the 30S ribosomal subunit. Contacts proteins S5 and S12.

Functionally, one of the primary rRNA binding proteins, it binds directly to 16S rRNA central domain where it helps coordinate assembly of the platform of the 30S subunit. The chain is Small ribosomal subunit protein uS8 from Streptococcus uberis (strain ATCC BAA-854 / 0140J).